The chain runs to 263 residues: Shikimate dehydrogenase (NADP(+)) (263 aa).

Shikimate-binding positions include 14–16 (SLS) and Thr60. The active-site Proton acceptor is Lys64. Shikimate is bound by residues Asn85 and Asp100. NADP(+) contacts are provided by residues 123–127 (GAGGA), 146–151 (NRTPQR), and Leu205. Tyr207 serves as a coordination point for shikimate. Gly228 serves as a coordination point for NADP(+). Shikimate is bound at residue Gln235.

It belongs to the shikimate dehydrogenase family. As to quaternary structure, homodimer.

It carries out the reaction shikimate + NADP(+) = 3-dehydroshikimate + NADPH + H(+). It functions in the pathway metabolic intermediate biosynthesis; chorismate biosynthesis; chorismate from D-erythrose 4-phosphate and phosphoenolpyruvate: step 4/7. Involved in the biosynthesis of the chorismate, which leads to the biosynthesis of aromatic amino acids. Catalyzes the reversible NADPH linked reduction of 3-dehydroshikimate (DHSA) to yield shikimate (SA). The protein is Shikimate dehydrogenase (NADP(+)) of Thermus thermophilus (strain ATCC 27634 / DSM 579 / HB8).